Consider the following 493-residue polypeptide: Cytoplasmic tRNA 2-thiolation protein 2 (493 aa).

S489 is modified (phosphoserine).

It belongs to the CTU2/NCS2 family. In terms of assembly, interacts with NCS6 and URM1. May act by forming a heterodimer with NCS6.

It is found in the cytoplasm. It participates in tRNA modification; 5-methoxycarbonylmethyl-2-thiouridine-tRNA biosynthesis. In terms of biological role, plays a central role in 2-thiolation of mcm(5)S(2)U at tRNA wobble positions of tRNA(Lys), tRNA(Glu) and tRNA(Gln). May act by forming a heterodimer with NCS6 that ligates sulfur from thiocarboxylated URM1 onto the uridine of tRNAs at wobble position. Prior mcm(5) tRNA modification by the elongator complex is required for 2-thiolation. May also be involved in protein urmylation. The polypeptide is Cytoplasmic tRNA 2-thiolation protein 2 (Saccharomyces cerevisiae (strain RM11-1a) (Baker's yeast)).